The chain runs to 194 residues: MNNLNVFTNEDNEMNVMPPPRVCPRCYSDQTRFSYFNNNKKSQPRYKCKNCCRCWTHGGVLRNIPVTGICDKSNLPKIDQSSVSQMILAEIQQGNHQPFKKFQENISVSVSSSSDVSIVGNHFDDLSELHGITNSTPIRSFTMDRLDFGEESFQQDLYDVGSNDLIGNPLINQSIGGYVDNHKDEHKLQFEYES.

The segment at 21–75 (RVCPRCYSDQTRFSYFNNNKKSQPRYKCKNCCRCWTHGGVLRNIPVTGICDKSNL) adopts a Dof-type zinc-finger fold. Zn(2+)-binding residues include Cys23, Cys26, Cys48, and Cys51.

It localises to the nucleus. Functionally, transcription factor that binds specifically to a 5'-AA[AG]G-3' consensus core sequence. The polypeptide is Dof zinc finger protein DOF4.2 (DOF4.2) (Arabidopsis thaliana (Mouse-ear cress)).